The chain runs to 429 residues: Ribosomal RNA small subunit methyltransferase B (429 aa).

S-adenosyl-L-methionine is bound by residues C254–K260, D277, D303, and D322. C375 acts as the Nucleophile in catalysis. Positions A397–D419 are disordered. Residues E400–L412 are compositionally biased toward polar residues.

This sequence belongs to the class I-like SAM-binding methyltransferase superfamily. RsmB/NOP family.

It localises to the cytoplasm. The catalysed reaction is cytidine(967) in 16S rRNA + S-adenosyl-L-methionine = 5-methylcytidine(967) in 16S rRNA + S-adenosyl-L-homocysteine + H(+). Functionally, specifically methylates the cytosine at position 967 (m5C967) of 16S rRNA. This chain is Ribosomal RNA small subunit methyltransferase B, found in Salmonella newport (strain SL254).